Consider the following 441-residue polypeptide: Eukaryotic translation initiation factor 3 subunit M (441 aa).

Residues Glu-196–Tyr-365 enclose the PCI domain. Residues Lys-405–Ser-418 are compositionally biased toward basic and acidic residues. A disordered region spans residues Lys-405–Glu-441.

This sequence belongs to the eIF-3 subunit M family. In terms of assembly, component of the eukaryotic translation initiation factor 3 (eIF-3) complex.

It localises to the cytoplasm. Functionally, component of the eukaryotic translation initiation factor 3 (eIF-3) complex, which is involved in protein synthesis of a specialized repertoire of mRNAs and, together with other initiation factors, stimulates binding of mRNA and methionyl-tRNAi to the 40S ribosome. The eIF-3 complex specifically targets and initiates translation of a subset of mRNAs involved in cell proliferation. The sequence is that of Eukaryotic translation initiation factor 3 subunit M from Phaeosphaeria nodorum (strain SN15 / ATCC MYA-4574 / FGSC 10173) (Glume blotch fungus).